A 613-amino-acid chain; its full sequence is DBH-like monooxygenase protein 1 (613 aa).

Residues 1 to 19 (MCGWPLLVLWALLPATAAG) form the signal peptide. Residues 20 to 587 (SPGRSYPHRV…PLVCEKAASP (568 aa)) lie on the Lumenal side of the membrane. The DOMON domain occupies 35–148 (GKYWLHWGRQ…STVRVIWAYH (114 aa)). The N-linked (GlcNAc...) asparagine glycan is linked to N114. Residue Y203 is part of the active site. 2 disulfide bridges follow: C205–C257 and C242–C269. H235 and H236 together coordinate Cu cation. The N-linked (GlcNAc...) asparagine glycan is linked to N247. Cu cation-binding residues include H307, H389, H391, and M464. Cystine bridges form between C364–C480, C368–C550, and C443–C465. Residue H389 is part of the active site. N476 and N517 each carry an N-linked (GlcNAc...) asparagine glycan. A helical membrane pass occupies residues 588 to 608 (PLHGIFSLRLLTCALLLGSML).

Belongs to the copper type II ascorbate-dependent monooxygenase family. Requires Cu(2+) as cofactor. In terms of processing, N-glycosylated. Broadly exprressed, with highest levels in salivary gland and ovary.

The protein resides in the endoplasmic reticulum membrane. This chain is DBH-like monooxygenase protein 1 (Moxd1), found in Mus musculus (Mouse).